Consider the following 270-residue polypeptide: Undecaprenyl-diphosphatase 3 (270 aa).

Transmembrane regions (helical) follow at residues 5–25 (YYIL…PIPI), 42–62 (IEGF…VLLI), 89–109 (FFFI…GVLF), 117–137 (LKGV…LWII), 192–212 (FSFL…ITDI), 220–240 (TLFV…YISL), and 250–270 (GNLK…LIFL).

Belongs to the UppP family.

The protein localises to the cell membrane. It catalyses the reaction di-trans,octa-cis-undecaprenyl diphosphate + H2O = di-trans,octa-cis-undecaprenyl phosphate + phosphate + H(+). Functionally, catalyzes the dephosphorylation of undecaprenyl diphosphate (UPP). Confers resistance to bacitracin. This is Undecaprenyl-diphosphatase 3 from Bacillus anthracis.